The following is a 95-amino-acid chain: High mobility group nucleosome-binding domain-containing protein 3 (95 aa).

3 stretches are compositionally biased toward basic and acidic residues: residues Met-1–Arg-25, Pro-39–Gly-53, and Gly-62–Lys-72. The interval Met-1–His-95 is disordered. Ser-6 is modified (phosphoserine). At Ser-78 the chain carries Phosphoserine.

The protein belongs to the HMGN family. In terms of assembly, interacts with the ligand binding domain of the thyroid receptor (TR) (in vitro). Requires the presence of thyroid hormone for its interaction. Interacts with transcriptional regulator SEHBP. Interacts with nucleosomes.

Its subcellular location is the nucleus. Binds to nucleosomes, regulating chromatin structure and consequently, chromatin-dependent processes such as transcription, DNA replication and DNA repair. Affects both insulin and glucagon levels and modulates the expression of pancreatic genes involved in insulin secretion. Regulates the expression of the glucose transporter SLC2A2 by binding specifically to its promoter region and recruiting PDX1 and additional transcription factors. Regulates the expression of SLC6A9, a glycine transporter which regulates the glycine concentration in synaptic junctions in the central nervous system, by binding to its transcription start site. May play a role in ocular development and astrocyte function. In Rattus norvegicus (Rat), this protein is High mobility group nucleosome-binding domain-containing protein 3 (Hmgn3).